Reading from the N-terminus, the 101-residue chain is NADH-quinone oxidoreductase subunit K (101 aa).

The next 3 helical transmembrane spans lie at 4 to 24, 30 to 50, and 61 to 81; these read LSHF…GIFL, IVLL…FIAF, and VFVF…LAIL.

Belongs to the complex I subunit 4L family. In terms of assembly, NDH-1 is composed of 14 different subunits. Subunits NuoA, H, J, K, L, M, N constitute the membrane sector of the complex.

It localises to the cell inner membrane. It catalyses the reaction a quinone + NADH + 5 H(+)(in) = a quinol + NAD(+) + 4 H(+)(out). In terms of biological role, NDH-1 shuttles electrons from NADH, via FMN and iron-sulfur (Fe-S) centers, to quinones in the respiratory chain. The immediate electron acceptor for the enzyme in this species is believed to be ubiquinone. Couples the redox reaction to proton translocation (for every two electrons transferred, four hydrogen ions are translocated across the cytoplasmic membrane), and thus conserves the redox energy in a proton gradient. This chain is NADH-quinone oxidoreductase subunit K, found in Thiobacillus denitrificans (strain ATCC 25259 / T1).